The primary structure comprises 200 residues: Coiled-coil domain-containing protein 85B (200 aa).

Positions 57-84 (LQGHLLEIRELKVINQRLQEENQELRDL) form a coiled coil. Residues 178–188 (DGSSSTGSVGS) are compositionally biased toward low complexity. Residues 178–200 (DGSSSTGSVGSPDQLHLVCSPDD) form a disordered region.

The protein belongs to the CCDC85 family.

It localises to the nucleus. Its subcellular location is the cytoplasm. The protein resides in the cytoskeleton. The protein localises to the microtubule organizing center. It is found in the centrosome. It localises to the cell junction. Its subcellular location is the adherens junction. In terms of biological role, functions as a transcriptional repressor. May inhibit the activity of CTNNB1 in a TP53-dependent manner and thus regulate cell growth. May function in adipocyte differentiation, negatively regulating mitotic clonal expansion. Plays a role in cell-cell adhesion and epithelium development through its interaction with proteins of the beta-catenin family. This Danio rerio (Zebrafish) protein is Coiled-coil domain-containing protein 85B (ccdc85b).